The sequence spans 704 residues: Meprin A subunit beta (704 aa).

The signal sequence occupies residues 1 to 20 (MDARHQPWFLVFATFLLVSG). Positions 21-64 (LPAPEKFVKDIDGGIDQDIFDINQGLGLDLFEGDIKLEANGKNS) are excised as a propeptide. Residues 21–654 (LPAPEKFVKD…RCEKRGSTRD (634 aa)) lie on the Extracellular side of the membrane. The Peptidase M12A domain occupies 63 to 257 (NSIIGDHKRW…LKLNQLYNCT (195 aa)). Disulfide bonds link cysteine 104-cysteine 256, cysteine 125-cysteine 145, and cysteine 266-cysteine 428. Histidine 153 contributes to the Zn(2+) binding site. Residue glutamate 154 is part of the active site. Zn(2+) is bound by residues histidine 157 and histidine 163. Residues asparagine 193, asparagine 219, asparagine 255, asparagine 316, asparagine 422, asparagine 437, asparagine 529, asparagine 548, and asparagine 593 are each glycosylated (N-linked (GlcNAc...) asparagine). One can recognise an MAM domain in the interval 261 to 430 (SFMDSCDFEL…INLSETRCPH (170 aa)). Residues 431–586 (HIWHIQNFTQ…GDDIYILLTV (156 aa)) form the MATH domain. The 41-residue stretch at 607–647 (VHNACSEVVCQNGGICVVQDGRAECKCPAGEDWWYMGKRCE) folds into the EGF-like domain. Cystine bridges form between cysteine 611-cysteine 622, cysteine 616-cysteine 631, and cysteine 633-cysteine 646. A helical membrane pass occupies residues 655–678 (TVIIAVSSTVTVFAVMLIITLVSV). Over 679–704 (YCTRRKYRKKARANTAAMTLENQHAF) the chain is Cytoplasmic. Threonine 697 is subject to Phosphothreonine.

In terms of assembly, homotetramer consisting of disulfide-linked beta subunits, or heterotetramer of two alpha and two beta subunits formed by non-covalent association of two disulfide-linked heterodimers. Interacts with MBL2 through its carbohydrate moiety. This interaction may inhibit its catalytic activity. Interacts with TSPAN8. It depends on Zn(2+) as a cofactor. In terms of processing, proteolytically activated by trypsin in the intestinal lumen and kallikrein-related peptidases in other tissues. Post-translationally, N-glycosylated; contains high mannose and/or complex biantennary structures. Phosphorylated by PKC at multiple sites of its cytoplasmic part. Phosphorylation dcreases activity at the cell surface, leading to diminished substrate cleavage. Isoform 1 is expressed in kidney, intestinal brush borders, and salivary ducts. Isoform 2 has been found in carcinoma cells.

Its subcellular location is the cell membrane. It is found in the secreted. It catalyses the reaction Hydrolysis of proteins, including azocasein, and peptides. Hydrolysis of 5-His-|-Leu-6, 6-Leu-|-Cys-7, 14-Ala-|-Leu-15 and 19-Cys-|-Gly-20 bonds in insulin B chain.. With respect to regulation, strongly inhibited by fetuin-A/AHSG. Inhibited by cysteine and by the metal ion chelators EDTA and 1,10-phenanthroline. Not inhibited by 3,4-dichloroisocourmarin, soybean trypsin inhibitor, or the cysteine proteinase inhibitors iodoacetic acid and E-64. Its function is as follows. Membrane metallopeptidase that sheds many membrane-bound proteins. Exhibits a strong preference for acidic amino acids at the P1' position. Known substrates include: FGF19, VGFA, IL1B, IL18, procollagen I and III, E-cadherin, KLK7, gastrin, ADAM10, tenascin-C. The presence of several pro-inflammatory cytokine among substrates implicate MEP1B in inflammation. It is also involved in tissue remodeling due to its capability to degrade extracellular matrix components. This chain is Meprin A subunit beta (Mep1b), found in Mus musculus (Mouse).